A 554-amino-acid polypeptide reads, in one-letter code: Carboxypeptidase Y homolog A (554 aa).

Residues 1–17 (MRVAASTVLLGVASAAS) form the signal peptide. Positions 18–137 (FQQQTQHVLS…KLADFNLRVK (120 aa)) are excised as a propeptide. Disulfide bonds link C191–C431, C325–C339, C349–C372, C356–C365, and C394–C401. An N-linked (GlcNAc...) asparagine glycan is attached at N222. S278 is a catalytic residue. The active site involves D470. N518 is a glycosylation site (N-linked (GlcNAc...) asparagine). H529 is a catalytic residue.

Belongs to the peptidase S10 family.

It localises to the vacuole. It carries out the reaction Release of a C-terminal amino acid with broad specificity.. Its function is as follows. Vacuolar carboxypeptidase involved in degradation of small peptides. Digests preferentially peptides containing an aliphatic or hydrophobic residue in P1' position, as well as methionine, leucine or phenylalanine in P1 position of ester substrate. This Podospora anserina (strain S / ATCC MYA-4624 / DSM 980 / FGSC 10383) (Pleurage anserina) protein is Carboxypeptidase Y homolog A (CPYA).